The following is a 274-amino-acid chain: MERGEGRRGDCSVQVRKKRTRRKSDGPDSIAETIKWWKEQNQKLQEENSSRKAPAKGSKKGCMAGKGGPENSNCAYRGVRQRTWGKWVAEIREPNRGRRLWLGSFPTALEAAHAYDEAARAMYGPTARVNFADNSTDANSGCTSAPSLMMSNGPATIPSDEKDELESPPFIVANGPAVLYQPDKKDVLERVVPEVQDVKTEGSNGLKRVCQERKTMEVCESEGIVLHKEVNISYDYFNVHEVVEMIIVELSADQKTEVHEEYQEGDDGFSLFSY.

Basic and acidic residues-rich tracts occupy residues 1–10 (MERGEGRRGD) and 35–50 (KWWKEQNQKLQEENSS). Residues 1–75 (MERGEGRRGD…KGGPENSNCA (75 aa)) are disordered. The segment at residues 75-132 (AYRGVRQRTWGKWVAEIREPNRGRRLWLGSFPTALEAAHAYDEAARAMYGPTARVNFA) is a DNA-binding region (AP2/ERF).

The protein belongs to the AP2/ERF transcription factor family. ERF subfamily.

It localises to the nucleus. Its function is as follows. Transcriptional activator that binds specifically to the DNA sequence 5'-[AG]CCGAC-3'. Binding to the C-repeat/DRE element mediates high salinity- and dehydration-inducible transcription. This chain is Dehydration-responsive element-binding protein 2A (DREB2A), found in Oryza sativa subsp. indica (Rice).